The sequence spans 424 residues: UPF0415 protein C7orf25 homolog (424 aa).

This sequence belongs to the UPF0415 family.

In Xenopus laevis (African clawed frog), this protein is UPF0415 protein C7orf25 homolog.